We begin with the raw amino-acid sequence, 802 residues long: Mitogen-activated protein kinase kinase kinase 20 (802 aa).

Residue Ser-2 is modified to N-acetylserine. Ser-2, Ser-3, and Ser-7 each carry phosphoserine. Residues 16–277 form the Protein kinase domain; sequence LQFFENCGGG…NLPDQCNSFL (262 aa). ATP contacts are provided by residues 22-30 and Lys-45; that span reads CGGGSFGSV. Asp-133 serves as the catalytic Proton acceptor. The residue at position 161 (Thr-161) is a Phosphothreonine; by autocatalysis. Ser-165 carries the phosphoserine; by autocatalysis modification. Ser-275 and Ser-302 each carry phosphoserine. The segment at 287 to 308 is leucine-zipper; sequence IEATLERLKKLERDLSFKEQEL. An SAM domain is found at 339 to 410; the sequence is WTEDDVYFWV…KSAIEKLTHD (72 aa). Phosphoserine is present on residues Lys-434, Gln-453, and Ser-567. Thr-586 bears the Phosphothreonine mark. Phosphoserine is present on residues Ser-587, Ser-593, and Ser-599. The span at 624–642 shows a compositional bias: polar residues; that stretch reads YQQITPSINPSRSSSPTQY. The segment at 624–802 is disordered; sequence YQQITPSINP…RGNYRGRRNF (179 aa). Thr-628 carries the post-translational modification Phosphothreonine. Phosphoserine occurs at positions 634, 638, 649, 650, and 661. A compositionally biased stretch (low complexity) spans 643-666; sequence GLSRNFSSLNLSSRDSGFSSLNDS. Residues 667–678 are compositionally biased toward basic and acidic residues; it reads SSERGRYSDRSR. Residues 670–713 are sensing domain (S); that stretch reads RGRYSDRSRNKYYRGSVSLNSSPKGRYGGKSQHSTPSRERYSGK. Ser-685, Ser-720, Ser-727, and Ser-733 each carry phosphoserine. The span at 728 to 741 shows a compositional bias: basic and acidic residues; sequence PDFKRSPNDHDRRV. At Thr-744 the chain carries Phosphothreonine. The segment at 776-802 is C-terminal domain (CTD); it reads RKKTHRQLSAKTSKERTRGNYRGRRNF.

The protein belongs to the protein kinase superfamily. STE Ser/Thr protein kinase family. MAP kinase kinase kinase subfamily. Homodimer. Interacts with ZNF33A. Component of a signaling complex containing at least AKAP13, PKN1, MAPK14, MAP3K20 and MAP2K3. Within this complex, AKAP13 interacts directly with PKN1, which in turn recruits MAPK14, MAP2K3 and MAP3K20. Interacts with EIF2AK4/GCN2; promoting EIF2AK4/GCN2 kinase activity. As to quaternary structure, interacts with isoform ZAKbeta. In terms of assembly, interacts with isoform ZAKalpha. It depends on Mg(2+) as a cofactor. In terms of processing, activated by phosphorylation by PKN1, followed by autophosphorylation on Thr-161 and Ser-165. Autophosphorylation in response to ribotoxic stress promotes dissociation from colliding ribosomes and activation.

It is found in the cytoplasm. The protein localises to the nucleus. The catalysed reaction is L-seryl-[protein] + ATP = O-phospho-L-seryl-[protein] + ADP + H(+). It catalyses the reaction L-threonyl-[protein] + ATP = O-phospho-L-threonyl-[protein] + ADP + H(+). With respect to regulation, activated in response to stress, such as ribosomal stress, osmotic shock and ionizing radiation. Activated by phosphorylation by PKN1, followed by autophosphorylation on Thr-161 and Ser-165. Stress-activated component of a protein kinase signal transduction cascade that promotes programmed cell death in response to various stress, such as ribosomal stress, osmotic shock and ionizing radiation. Acts by catalyzing phosphorylation of MAP kinase kinases, leading to activation of the JNK (MAPK8/JNK1, MAPK9/JNK2 and/or MAPK10/JNK3) and MAP kinase p38 (MAPK11, MAPK12, MAPK13 and/or MAPK14) pathways. Activates JNK through phosphorylation of MAP2K4/MKK4 and MAP2K7/MKK7, and MAP kinase p38 gamma (MAPK12) via phosphorylation of MAP2K3/MKK3 and MAP2K6/MKK6. Involved in stress associated with adrenergic stimulation: contributes to cardiac decompensation during periods of acute cardiac stress. May be involved in regulation of S and G2 cell cycle checkpoint by mediating phosphorylation of CHEK2. In terms of biological role, key component of the stress-activated protein kinase signaling cascade in response to ribotoxic stress or UV-B irradiation. Acts as the proximal sensor of ribosome collisions during the ribotoxic stress response (RSR). Directly binds to the ribosome by inserting its flexible C-terminus into the ribosomal intersubunit space, thereby acting as a sentinel for colliding ribosomes. Upon ribosome collisions, activates either the stress-activated protein kinase signal transduction cascade or the integrated stress response (ISR), leading to programmed cell death or cell survival, respectively. Dangerous levels of ribosome collisions trigger the autophosphorylation and activation of MAP3K20, which dissociates from colliding ribosomes and phosphorylates MAP kinase kinases, leading to activation of the JNK and MAP kinase p38 pathways that promote programmed cell death. Less dangerous levels of ribosome collisions trigger the integrated stress response (ISR): MAP3K20 activates EIF2AK4/GCN2 independently of its protein-kinase activity, promoting EIF2AK4/GCN2-mediated phosphorylation of EIF2S1/eIF-2-alpha. Also acts as a histone kinase by phosphorylating histone H3 at 'Ser-28' (H3S28ph). Functionally, isoform that lacks the C-terminal region that mediates ribosome-binding: does not act as a sensor of ribosome collisions in response to ribotoxic stress. May act as an antagonist of isoform ZAKalpha: interacts with isoform ZAKalpha, leading to decrease the expression of isoform ZAKalpha. The polypeptide is Mitogen-activated protein kinase kinase kinase 20 (Mus musculus (Mouse)).